A 163-amino-acid chain; its full sequence is NADH-quinone oxidoreductase subunit I (163 aa).

4Fe-4S ferredoxin-type domains lie at 53–83 (LRRYPNGEERCIACKLCEAICPAQAITIEAG) and 94–123 (VRYDIDMVKCIYCGFCQEACPVDAIVEGPN). [4Fe-4S] cluster is bound by residues C63, C66, C69, C73, C103, C106, C109, and C113.

The protein belongs to the complex I 23 kDa subunit family. In terms of assembly, NDH-1 is composed of 14 different subunits. Subunits NuoA, H, J, K, L, M, N constitute the membrane sector of the complex. The cofactor is [4Fe-4S] cluster.

It is found in the cell inner membrane. It carries out the reaction a quinone + NADH + 5 H(+)(in) = a quinol + NAD(+) + 4 H(+)(out). Functionally, NDH-1 shuttles electrons from NADH, via FMN and iron-sulfur (Fe-S) centers, to quinones in the respiratory chain. The immediate electron acceptor for the enzyme in this species is believed to be ubiquinone. Couples the redox reaction to proton translocation (for every two electrons transferred, four hydrogen ions are translocated across the cytoplasmic membrane), and thus conserves the redox energy in a proton gradient. This Brucella anthropi (strain ATCC 49188 / DSM 6882 / CCUG 24695 / JCM 21032 / LMG 3331 / NBRC 15819 / NCTC 12168 / Alc 37) (Ochrobactrum anthropi) protein is NADH-quinone oxidoreductase subunit I.